A 71-amino-acid chain; its full sequence is Light-harvesting protein B-800/850 alpha chain (71 aa).

Over 1-15 the chain is Cytoplasmic; it reads MNQGKVWRVVKPTVG. A helical transmembrane segment spans residues 16–36; sequence VPVYLGAVAVTALILHGGLLA. His31 serves as a coordination point for a bacteriochlorophyll. Topologically, residues 37–50 are periplasmic; that stretch reads KTDWFGAYWNGGKK. The helical transmembrane segment at 51–71 threads the bilayer; it reads AAAAAAAVAPAPVAAPQAPAQ.

Belongs to the antenna complex alpha subunit family. As to quaternary structure, an alpha/beta heterodimer conjugated to 3 bacteriochlorophyll molecules. The core complex is formed by different alpha and beta chains, binding bacteriochlorophyll molecules, and arranged most probably in tetrameric structures disposed around the reaction center. The non-pigmented gamma chains may constitute additional components.

The protein resides in the cell membrane. Functionally, antenna complexes are light-harvesting systems, which transfer the excitation energy to the reaction centers. This is Light-harvesting protein B-800/850 alpha chain (pucA) from Rubrivivax gelatinosus (Rhodocyclus gelatinosus).